The chain runs to 993 residues: Nisin biosynthesis protein NisB (993 aa).

Residues 838-851 (AIFCADSKIIPNLL) traverse the membrane as a helical segment.

The protein to B.subtilis SpaB and S.epidermidis EpiB.

The protein resides in the cell membrane. Involved in the post-translational modification of the lantibiotic nisin. This Lactococcus lactis subsp. lactis (Streptococcus lactis) protein is Nisin biosynthesis protein NisB (nisB).